Reading from the N-terminus, the 420-residue chain is MVSRQEQFEQVQAVKKSINTASEEVKNQVLLAMADHLVAATEEILAANALDMAAAKGKISDVMLDRLYLDADRIEAMARGIREVVALPDPIGEVLETSQLENGLVITKKRVAMGVIGIIYESRPNVTSDAAALTLKSGNAVVLRSGKDAYQTTHAIVTALKKGLETTTIHPNVIQLVEDTSRESSYAMMKAKGYLDLLIPRGGADLINAVVENAIVPVIETGTGIVHVYVDKDADDDKALSIINNAKTSRPSVCNAMEVLLVHEDKAASFLPRLEQVLVADRKEAGLEPIQFRLDSKASQFVSGQAAQAQDFDTEFLDYILAVKVVSSLEEAVAHIESHSTHHSDAIVTENAEAAAYFTDQVDSAAVYVNASTRFTDGGQFGLGCEMGISTQKLHARGPMGLKELTSYKYVVTGDGQIRE.

Belongs to the gamma-glutamyl phosphate reductase family.

The protein resides in the cytoplasm. The catalysed reaction is L-glutamate 5-semialdehyde + phosphate + NADP(+) = L-glutamyl 5-phosphate + NADPH + H(+). The protein operates within amino-acid biosynthesis; L-proline biosynthesis; L-glutamate 5-semialdehyde from L-glutamate: step 2/2. Functionally, catalyzes the NADPH-dependent reduction of L-glutamate 5-phosphate into L-glutamate 5-semialdehyde and phosphate. The product spontaneously undergoes cyclization to form 1-pyrroline-5-carboxylate. The protein is Gamma-glutamyl phosphate reductase of Streptococcus pneumoniae serotype 19F (strain G54).